A 104-amino-acid chain; its full sequence is Large ribosomal subunit protein bL21 (104 aa).

Belongs to the bacterial ribosomal protein bL21 family. In terms of assembly, part of the 50S ribosomal subunit. Contacts protein L20.

In terms of biological role, this protein binds to 23S rRNA in the presence of protein L20. In Tropheryma whipplei (strain Twist) (Whipple's bacillus), this protein is Large ribosomal subunit protein bL21.